The primary structure comprises 413 residues: Histidine--tRNA ligase (413 aa).

The protein belongs to the class-II aminoacyl-tRNA synthetase family. In terms of assembly, homodimer.

It localises to the cytoplasm. It catalyses the reaction tRNA(His) + L-histidine + ATP = L-histidyl-tRNA(His) + AMP + diphosphate + H(+). The polypeptide is Histidine--tRNA ligase (Geobacter metallireducens (strain ATCC 53774 / DSM 7210 / GS-15)).